The sequence spans 513 residues: ATP synthase subunit alpha (513 aa).

169–176 lines the ATP pocket; it reads GDRQTGKT.

It belongs to the ATPase alpha/beta chains family. F-type ATPases have 2 components, CF(1) - the catalytic core - and CF(0) - the membrane proton channel. CF(1) has five subunits: alpha(3), beta(3), gamma(1), delta(1), epsilon(1). CF(0) has three main subunits: a(1), b(2) and c(9-12). The alpha and beta chains form an alternating ring which encloses part of the gamma chain. CF(1) is attached to CF(0) by a central stalk formed by the gamma and epsilon chains, while a peripheral stalk is formed by the delta and b chains.

The protein localises to the cell inner membrane. The enzyme catalyses ATP + H2O + 4 H(+)(in) = ADP + phosphate + 5 H(+)(out). Produces ATP from ADP in the presence of a proton gradient across the membrane. The alpha chain is a regulatory subunit. The chain is ATP synthase subunit alpha from Shewanella denitrificans (strain OS217 / ATCC BAA-1090 / DSM 15013).